Here is a 472-residue protein sequence, read N- to C-terminus: Tryptophanase (472 aa).

Lys-270 is modified (N6-(pyridoxal phosphate)lysine).

This sequence belongs to the beta-eliminating lyase family. Homotetramer. The cofactor is pyridoxal 5'-phosphate.

It carries out the reaction L-tryptophan + H2O = indole + pyruvate + NH4(+). It functions in the pathway amino-acid degradation; L-tryptophan degradation via pyruvate pathway; indole and pyruvate from L-tryptophan: step 1/1. This is Tryptophanase (tnaA) from Haemophilus influenzae.